The sequence spans 562 residues: Nicotinate phosphoribosyltransferase (562 aa).

Nicotinate contacts are provided by Tyr-36, Phe-183, and Thr-225. The residue at position 228 (His-228) is a Phosphohistidine. Thr-397 is a 5-phospho-alpha-D-ribose 1-diphosphate binding site.

The protein belongs to the NAPRTase family. Mg(2+) serves as cofactor. It depends on Mn(2+) as a cofactor. Post-translationally, transiently phosphorylated on a His residue during the reaction cycle. Phosphorylation strongly increases the affinity for substrates and increases the rate of nicotinate D-ribonucleotide production. Dephosphorylation regenerates the low-affinity form of the enzyme, leading to product release.

The catalysed reaction is nicotinate + 5-phospho-alpha-D-ribose 1-diphosphate + ATP + H2O = nicotinate beta-D-ribonucleotide + ADP + phosphate + diphosphate. Its pathway is cofactor biosynthesis; NAD(+) biosynthesis; nicotinate D-ribonucleotide from nicotinate: step 1/1. Catalyzes the first step in the biosynthesis of NAD from nicotinic acid, the ATP-dependent synthesis of beta-nicotinate D-ribonucleotide from nicotinate and 5-phospho-D-ribose 1-phosphate. Helps prevent cellular oxidative stress via its role in NAD biosynthesis. The chain is Nicotinate phosphoribosyltransferase from Caenorhabditis elegans.